Consider the following 667-residue polypeptide: UvrABC system protein B (667 aa).

The region spanning 31–414 is the Helicase ATP-binding domain; it reads KNFEAGAKAQ…EAEQTDIQVD (384 aa). 44–51 is an ATP binding site; sequence GATGTGKT. The short motif at 97–120 is the Beta-hairpin element; sequence YYDYYQPEAYVPSSDTYIEKDSSI. In terms of domain architecture, Helicase C-terminal spans 435–597; that stretch reads QIDDLVGEIN…ITPKTIIKPI (163 aa). The UVR domain occupies 630–665; that stretch reads LEMVERLSEQMRLAAKKLDFEQAATLRDTILELKSE.

Belongs to the UvrB family. In terms of assembly, forms a heterotetramer with UvrA during the search for lesions. Interacts with UvrC in an incision complex.

The protein resides in the cytoplasm. Functionally, the UvrABC repair system catalyzes the recognition and processing of DNA lesions. A damage recognition complex composed of 2 UvrA and 2 UvrB subunits scans DNA for abnormalities. Upon binding of the UvrA(2)B(2) complex to a putative damaged site, the DNA wraps around one UvrB monomer. DNA wrap is dependent on ATP binding by UvrB and probably causes local melting of the DNA helix, facilitating insertion of UvrB beta-hairpin between the DNA strands. Then UvrB probes one DNA strand for the presence of a lesion. If a lesion is found the UvrA subunits dissociate and the UvrB-DNA preincision complex is formed. This complex is subsequently bound by UvrC and the second UvrB is released. If no lesion is found, the DNA wraps around the other UvrB subunit that will check the other stand for damage. This is UvrABC system protein B from Latilactobacillus sakei subsp. sakei (strain 23K) (Lactobacillus sakei subsp. sakei).